We begin with the raw amino-acid sequence, 96 residues long: Protein FPV129 (96 aa).

2 consecutive transmembrane segments (helical) span residues 36 to 56 (IILD…FVII) and 71 to 91 (LFLL…LYIV).

Belongs to the chordopoxvirinae L2 family.

It is found in the virion membrane. The protein localises to the host cytoplasm. In terms of biological role, early protein involved in early virion morphogenesis. Participates in the formation and elongation of crescent-shaped membrane precursors of immature virions in cytoplasmic factories. In Vertebrata (FPV), this protein is Protein FPV129.